A 212-amino-acid chain; its full sequence is Large ribosomal subunit protein mL48 (212 aa).

The transit peptide at 1–28 (MSGTLEKVLCLRNNTIFKQAFSLLRFRT) directs the protein to the mitochondrion. The residue at position 199 (Lys199) is an N6-succinyllysine.

The protein belongs to the mitochondrion-specific ribosomal protein mL48 family. As to quaternary structure, component of the mitochondrial large ribosomal subunit (mt-LSU). Mature mammalian 55S mitochondrial ribosomes consist of a small (28S) and a large (39S) subunit. The 28S small subunit contains a 12S ribosomal RNA (12S mt-rRNA) and 30 different proteins. The 39S large subunit contains a 16S rRNA (16S mt-rRNA), a copy of mitochondrial valine transfer RNA (mt-tRNA(Val)), which plays an integral structural role, and 52 different proteins. mL48 is located at the central protuberance. Interacts with OXA1L.

It localises to the mitochondrion. The protein is Large ribosomal subunit protein mL48 (MRPL48) of Homo sapiens (Human).